The primary structure comprises 541 residues: MTTPAGSGSGFGSVSWWGLSPALDLQAESPPVDPDSQADTVHSNPELDVLLLGSVDGRHLLRTLSRAKFWPRRRFNFFVLENNLEAVARHMLIFSLALEEPEKMGLQERSETFLEVWGNALLRPPVAAFVRAQADLLAHLVPEPDRLEEQLPWLSLRALKFRERDALEAVFRFWAGGEKGPQAFPMSRLWDSRLRHYLGSRYDARRGVSDWDLRMKLHDRGAQVIHPQEFRRWRDTGVAFELRDSSAYHVPNRTLASGRLLSYRGERVAARGYWGDIATGPFVAFGIEADDESLLRTSNGQPVKTAGEITQHNVTELLRDVAAWGRARATGGDLEEQQHAEGSPEPGTPAAPTPESFTVHFLPLNSAQTLHHKSCYNGRFQLLYVACGMVHLLIPELGACVAPGGNLIVELARYLVDVRQEQLQGFNTRVRELAQAAGFAPQTGARPSETFARFCKSQESALGNTVPAVEPGTPPLDILAQPLEASNPALEGLTQPLQGGTPHCEPCQLPSESPGSLSEVLAQPQGALAPPNCESDSKTGV.

Disordered regions lie at residues 332-353 (GDLE…AAPT) and 490-541 (LEGL…KTGV).

The protein belongs to the DNAAF3 family.

It localises to the cytoplasm. It is found in the dynein axonemal particle. Functionally, required for the assembly of axonemal inner and outer dynein arms. Involved in preassembly of dyneins into complexes before their transport into cilia. The polypeptide is Dynein axonemal assembly factor 3 (DNAAF3) (Homo sapiens (Human)).